Reading from the N-terminus, the 192-residue chain is MNANLPPSAISELHGPRLLLRAWRDSDREAFAEMCADPQVMEFFPSVLDRAQSDALVDRVQAHFAERGYGPWALELPGEAAFIGFTGLFDVTMDVHFAPTVEIGWRLAPAYWGRGLAREAAETALDFAFERLRLPEVVAFTTPPNRRSWGLMERLGMRRDPAEDFDHPLLAADHPMRRHILYRVDAARWAER.

The N-acetyltransferase domain occupies 18–187 (LLLRAWRDSD…RHILYRVDAA (170 aa)). CoA is bound by residues 105-107 (WRL), G113, N145, and 150-152 (GLM).

In terms of biological role, catalyzes the transfer of an acetyl group from acetyl coenzyme A (AcCoA) to an acceptor substrate and releases both CoA and the acetylated product. It prefers the peptide Asp-Phe methyl ester (or aspartame) and the peptide antibiotics polymyxin B and colistin. Other substrates like dopamine, serotonin, puromycin, chloramphenicol, D-glucosamine, glycine and N-alpha-acetyl-L-glutamine are used and displayed lower activity. In Pseudomonas aeruginosa (strain ATCC 15692 / DSM 22644 / CIP 104116 / JCM 14847 / LMG 12228 / 1C / PRS 101 / PAO1), this protein is Acetyltransferase PA3944.